The following is a 45-amino-acid chain: Toxin Bcs III 15.09 (45 aa).

The region spanning 2–44 (QGTACTGEHAHNFCLNGGTCRHIQSLGEYYCICPEGYTGHRCE) is the EGF-like domain. Intrachain disulfides connect Cys-6–Cys-21, Cys-15–Cys-32, and Cys-34–Cys-43.

It localises to the secreted. It is found in the nematocyst. Its function is as follows. Has both toxic and EGF activity. The protein is Toxin Bcs III 15.09 of Bunodosoma caissarum (Sea anemone).